The chain runs to 147 residues: Large ribosomal subunit protein uL11 (147 aa).

This sequence belongs to the universal ribosomal protein uL11 family. In terms of assembly, part of the ribosomal stalk of the 50S ribosomal subunit. Interacts with L10 and the large rRNA to form the base of the stalk. L10 forms an elongated spine to which L12 dimers bind in a sequential fashion forming a multimeric L10(L12)X complex. Post-translationally, one or more lysine residues are methylated.

Functionally, forms part of the ribosomal stalk which helps the ribosome interact with GTP-bound translation factors. This is Large ribosomal subunit protein uL11 from Phocaeicola vulgatus (strain ATCC 8482 / DSM 1447 / JCM 5826 / CCUG 4940 / NBRC 14291 / NCTC 11154) (Bacteroides vulgatus).